A 109-amino-acid polypeptide reads, in one-letter code: Nucleoid-associated protein SO_2014 (109 aa).

This sequence belongs to the YbaB/EbfC family. In terms of assembly, homodimer.

It is found in the cytoplasm. It localises to the nucleoid. Binds to DNA and alters its conformation. May be involved in regulation of gene expression, nucleoid organization and DNA protection. In Shewanella oneidensis (strain ATCC 700550 / JCM 31522 / CIP 106686 / LMG 19005 / NCIMB 14063 / MR-1), this protein is Nucleoid-associated protein SO_2014.